A 95-amino-acid chain; its full sequence is Small ribosomal subunit protein bS6 (95 aa).

The protein belongs to the bacterial ribosomal protein bS6 family.

In terms of biological role, binds together with bS18 to 16S ribosomal RNA. This is Small ribosomal subunit protein bS6 from Caldanaerobacter subterraneus subsp. tengcongensis (strain DSM 15242 / JCM 11007 / NBRC 100824 / MB4) (Thermoanaerobacter tengcongensis).